The sequence spans 70 residues: Putative peptide YY-3 (70 aa).

The first 23 residues, 1–23 (MVSVCRPWPAVAIALLALLVCLG), serve as a signal peptide directing secretion.

Belongs to the NPY family.

The protein resides in the secreted. The protein is Putative peptide YY-3 (PYY3) of Homo sapiens (Human).